The sequence spans 103 residues: NAD(P)H-quinone oxidoreductase subunit 4L, organellar chromatophore (103 aa).

A run of 3 helical transmembrane segments spans residues 3-23, 32-52, and 63-83; these read IMLE…VWGL, VLMS…AFSN, and VFAI…LAIL.

It belongs to the complex I subunit 4L family. NDH is composed of at least 16 different subunits, 5 of which are encoded in the nucleus.

Its subcellular location is the plastid. It is found in the organellar chromatophore thylakoid membrane. The enzyme catalyses a plastoquinone + NADH + (n+1) H(+)(in) = a plastoquinol + NAD(+) + n H(+)(out). It carries out the reaction a plastoquinone + NADPH + (n+1) H(+)(in) = a plastoquinol + NADP(+) + n H(+)(out). NDH shuttles electrons from NAD(P)H:plastoquinone, via FMN and iron-sulfur (Fe-S) centers, to quinones in the photosynthetic chain and possibly in a chloroplast respiratory chain. The immediate electron acceptor for the enzyme in this species is believed to be plastoquinone. Couples the redox reaction to proton translocation, and thus conserves the redox energy in a proton gradient. In Paulinella chromatophora, this protein is NAD(P)H-quinone oxidoreductase subunit 4L, organellar chromatophore.